Here is a 338-residue protein sequence, read N- to C-terminus: 4'-phosphopantetheinyl transferase (338 aa).

This sequence belongs to the P-Pant transferase superfamily.

The catalysed reaction is apo-[ACP] + CoA = holo-[ACP] + adenosine 3',5'-bisphosphate + H(+). Acyl-carrier-protein synthase that transfers the 4'-phosphopantetheine moiety from coenzyme A to a Ser of an acyl-carrier-protein. The 4'-phosphopantetheine (4'-PPT) portion of CoA provides the essential prosthetic group for a number of carrier proteins and multi-domain enzymes, priming them for the acceptance of acyl building blocks in fatty acid synthesis and many aspects of secondary metabolism mediated by polyketide synthases (PKSs) and non-ribosomal peptide synthetases (NRPSs). Plays a key role in liamocins biosynthesis by activationg the HR-PKS PKS1 that produces 3,5-dihydroxydecanoic acid, a precursor of liamocins. The chain is 4'-phosphopantetheinyl transferase from Aureobasidium melanogenum (Aureobasidium pullulans var. melanogenum).